The sequence spans 303 residues: Eukaryotic translation initiation factor 3 subunit G (303 aa).

The segment at 1–38 (MATQTKHDWADDEDLEETTTTTAPTTDLPPPQKIQNKD) is disordered. The RRM domain occupies 223–301 (ATLRVTNVSE…LILRVEFAKK (79 aa)).

It belongs to the eIF-3 subunit G family. As to quaternary structure, component of the eukaryotic translation initiation factor 3 (eIF-3) complex.

The protein resides in the cytoplasm. Functionally, RNA-binding component of the eukaryotic translation initiation factor 3 (eIF-3) complex, which is involved in protein synthesis of a specialized repertoire of mRNAs and, together with other initiation factors, stimulates binding of mRNA and methionyl-tRNAi to the 40S ribosome. The eIF-3 complex specifically targets and initiates translation of a subset of mRNAs involved in cell proliferation. This subunit can bind 18S rRNA. This is Eukaryotic translation initiation factor 3 subunit G from Chaetomium globosum (strain ATCC 6205 / CBS 148.51 / DSM 1962 / NBRC 6347 / NRRL 1970) (Soil fungus).